The primary structure comprises 554 residues: Intraflagellar transport protein 56 (554 aa).

The tract at residues M1–G24 is disordered. TPR repeat units lie at residues E57–N90, E92–R125, T151–Y184, and A468–R501.

The protein belongs to the IFT56 family. In terms of assembly, component of the IFT complex B. Interacts with IFT46; the interaction is direct.

The protein localises to the cell projection. Its subcellular location is the cilium. Functionally, component of the intraflagellar transport (IFT) complex B required for transport of proteins in the motile cilium. Required for transport of specific ciliary cargo proteins related to motility, while it is neither required for IFT complex B assembly or motion nor for cilium assembly. Required for efficient coupling between the accumulation of GLI2 and GLI3 at the ciliary tips and their dissociation from the negative regulator SUFU. Plays a key role in maintaining the integrity of the IFT complex B and the proper ciliary localization of the IFT complex B components. Not required for IFT complex A ciliary localization or function. Essential for maintaining proper microtubule organization within the ciliary axoneme. This chain is Intraflagellar transport protein 56, found in Homo sapiens (Human).